Consider the following 122-residue polypeptide: Large ribosomal subunit protein uL24 (122 aa).

This sequence belongs to the universal ribosomal protein uL24 family. Part of the 50S ribosomal subunit.

Functionally, one of two assembly initiator proteins, it binds directly to the 5'-end of the 23S rRNA, where it nucleates assembly of the 50S subunit. One of the proteins that surrounds the polypeptide exit tunnel on the outside of the subunit. The sequence is that of Large ribosomal subunit protein uL24 from Trichodesmium erythraeum (strain IMS101).